Reading from the N-terminus, the 857-residue chain is Protein sip-5 (857 aa).

Disordered regions lie at residues 1–81, 157–231, 384–416, 466–517, 545–747, and 763–857; these read MGNA…ARRL, GLPI…FKPT, SESSVNSGSLSPGVASPGGRRRNQSLSANAPNV, FGRR…GNRR, KAEK…PMFN, and HAGK…QVTL. Basic and acidic residues-rich tracts occupy residues 7 to 16 and 36 to 48; these read KESRGDDSGR and ESSRRNRNTRHDL. Over residues 49-61 the composition is skewed to low complexity; sequence TGLLGRAAGGSSS. The span at 62–81 shows a compositional bias: basic and acidic residues; the sequence is HADERHERKETKQEREARRL. Composition is skewed to polar residues over residues 179-191 and 199-208; these read ASPTDASSNTNHL and SLSTASEHST. 3 stretches are compositionally biased toward low complexity: residues 209–230, 384–394, and 476–504; these read SNAGSALPSPGSGKGSSSPFKP, SESSVNSGSLS, and SASATPGNGDENRGTGPATPANAGATANT. A compositionally biased stretch (basic and acidic residues) spans 545 to 572; sequence KAEKEEQKEAKKREKEREKAEKKAEKAA. 2 stretches are compositionally biased toward low complexity: residues 586 to 604 and 621 to 645; these read SRSGHSSASGSSLSLPGLS and ASVASAMASTGAAMTTPAAPGALAP. Residues 648–657 are compositionally biased toward basic and acidic residues; it reads STKDKGKAVD. A compositionally biased stretch (low complexity) spans 688–697; the sequence is SSASSASSSA. Residues 698–712 show a composition bias toward polar residues; the sequence is VESNQGSYVPPSNLQ. Positions 783 to 799 are enriched in basic and acidic residues; sequence ETAKSGEGAGEHVEHVL. Composition is skewed to polar residues over residues 800–838 and 845–857; these read DSQTTGISEQDSEINSQPPRLTVTLDSPATSVGDVSTAS and NETTVEHATQVTL.

The protein belongs to the SIP5 family.

The protein resides in the cytoplasm. In terms of biological role, may negatively regulate the snf-1 kinase. The protein is Protein sip-5 (sip-5) of Neurospora crassa (strain ATCC 24698 / 74-OR23-1A / CBS 708.71 / DSM 1257 / FGSC 987).